The sequence spans 1064 residues: Isoleucine--tRNA ligase, cytoplasmic (1064 aa).

The short motif at 42–52 is the 'HIGH' region element; it reads PFATGRPHHGH. Positions 597–601 match the 'KMSKS' region motif; sequence KMSKR. Residue Lys600 coordinates ATP.

This sequence belongs to the class-I aminoacyl-tRNA synthetase family.

The protein resides in the cytoplasm. It catalyses the reaction tRNA(Ile) + L-isoleucine + ATP = L-isoleucyl-tRNA(Ile) + AMP + diphosphate. The polypeptide is Isoleucine--tRNA ligase, cytoplasmic (irs1) (Schizosaccharomyces pombe (strain 972 / ATCC 24843) (Fission yeast)).